A 551-amino-acid polypeptide reads, in one-letter code: ETS domain-containing transcription factor ERF (551 aa).

2 positions are modified to phosphothreonine: T3 and T7. S20 and S24 each carry phosphoserine. A DNA-binding region (ETS) is located at residues 27 to 107 (IQLWHFILEL…KGKRFTYKFN (81 aa)). Disordered regions lie at residues 130 to 169 (QSAP…SSSS) and 184 to 304 (GSVS…SHFS). Phosphoserine is present on residues S185 and S190. Pro residues predominate over residues 239–250 (RGGPEPLSPFPV). Residues 251-268 (SPLAGPGSLLPPQLSPAL) show a composition bias toward low complexity. Gly residues predominate over residues 289–301 (SGGGGPSGSGGGS). S327 carries the post-translational modification Phosphoserine. A disordered region spans residues 342–476 (PQRPDKCPLP…KPEPGEAPGV (135 aa)). The span at 348–361 (CPLPPMAPETPPVP) shows a compositional bias: pro residues. A compositionally biased stretch (low complexity) spans 362–373 (SSASSSSSSSSS). Gly residues predominate over residues 404-413 (GGSGSGGLAE). A phosphoserine mark is found at S433 and S437. Residues 433 to 453 (SEGESEEVEVTDISDEDEEDG) show a composition bias toward acidic residues. The residue at position 443 (T443) is a Phosphothreonine. Position 446 is a phosphoserine (S446). Residues K467, K483, and K514 each participate in a glycyl lysine isopeptide (Lys-Gly) (interchain with G-Cter in SUMO2) cross-link. A disordered region spans residues 495 to 551 (RLEGGGCLSGGPEDEGEDKKVRGDVGPGESGGPLTPRRVSSDLQHATAQLSLEHRDS). T529 is modified (phosphothreonine; by MAPK1). Residues S534, S535, and S551 each carry the phosphoserine modification. Residues 535–544 (SDLQHATAQL) are compositionally biased toward polar residues.

The protein belongs to the ETS family. Phosphorylated by multiple kinases including MAPK1/ERK2 at THR-529. Phosphorylation regulates the activity of ERF. As to expression, expressed along the osteogenic margins of the developing calvarial bones, in a similar distribution to that observed for the master osteogenic regulator RUNX2.

The protein resides in the nucleus. Its function is as follows. Potent transcriptional repressor that binds to the H1 element of the Ets2 promoter. May regulate other genes involved in cellular proliferation. Required for extraembryonic ectoderm differentiation, ectoplacental cone cavity closure, and chorioallantoic attachment. May be important for regulating trophoblast stem cell differentiation. The chain is ETS domain-containing transcription factor ERF (Erf) from Mus musculus (Mouse).